A 466-amino-acid chain; its full sequence is 3-isopropylmalate dehydratase large subunit (466 aa).

[4Fe-4S] cluster is bound by residues C347, C407, and C410.

Belongs to the aconitase/IPM isomerase family. LeuC type 1 subfamily. Heterodimer of LeuC and LeuD. The cofactor is [4Fe-4S] cluster.

It carries out the reaction (2R,3S)-3-isopropylmalate = (2S)-2-isopropylmalate. It functions in the pathway amino-acid biosynthesis; L-leucine biosynthesis; L-leucine from 3-methyl-2-oxobutanoate: step 2/4. Functionally, catalyzes the isomerization between 2-isopropylmalate and 3-isopropylmalate, via the formation of 2-isopropylmaleate. In Escherichia coli O17:K52:H18 (strain UMN026 / ExPEC), this protein is 3-isopropylmalate dehydratase large subunit.